The chain runs to 759 residues: MGVSQIWEFLKPYLQDSRIPLRKFVIDFNKSQKRAPRIAIDAYGWLFECGFIQNIDISARSRSRSRSPTRSPRDSDIDSSQEYYGSRSYTTTGKAVINFISRLKELLSLNVEFLLVFDGVMKPSFKRKFNHEQNATTCDDEKEYYSSWEQHVKNHEVYGNCKGLLAPSDPEFISLVRKLLDLMNISYVIACGEGEAQCVWLQVSGAVDFILSNDSDTLVFGGEKILKNYSKFYDDFGPSSITSHSPSRHHDSKESFVTVIDLPKINKVAGKKFDRLSLLFFSVLLGADYNRGVKGLGKNKSLQLAQCEDPNFSMEFYDIFKDFNLEDLTSESLRKSRYRLFQKRLYLYCKDHSVELFGRNYPVLLNQGSFEGWPSTVAIMHYFHPIVQPYFDEEVLSDKYINMAGNGHYRNLNFNELKYFLQSLNLPQISSFDKWFHDSMHEMFLLREFLSIDESDNIGKGNMRITEEKIMNIDGGKFQIPCFKIRYTTFLPNIPISSQSPLKRSNSPSRSKSPTRRQMDIMEHPNSLWLPKYLIPQSHPLVIQYYETQQLIQKEKEKKGKKSNKSRLPQKNNLDEFLRKHTSPIKSIGKVGESRKEILEPVRKRLFVDTDEDTSLEEIPAPTRLTTVDEHSDNDDDSLIFVDEITNSQSVLDSSPGKRIRDLTQDEQVDVWKDVIEISPIKKSRTTNAEKNPPESGLKSRSSITINARLQGTKMLPPNLTAPRLEREHSSVLDQLVTDAQDTVDRFVACDSDSSSTIE.

3 disordered regions span residues 62–83, 498–518, and 683–702; these read RSRSRSPTRSPRDSDIDSSQEY, SQSPLKRSNSPSRSKSPTRRQ, and KSRTTNAEKNPPESGLKSRS. The span at 500–512 shows a compositional bias: low complexity; the sequence is SPLKRSNSPSRSK. Ser730 and Ser731 each carry phosphoserine.

Belongs to the XPG/RAD2 endonuclease family. GEN subfamily.

The protein localises to the cytoplasm. Its subcellular location is the nucleus. Endonuclease which resolves Holliday junctions by the introduction of symmetrically related cuts across the junction point, to produce nicked duplex products in which the nicks can be readily ligated. Four-way DNA intermediates, also known as Holliday junctions, are formed during homologous recombination and DNA repair, and their resolution is necessary for proper chromosome segregation. Involved in DNA-damage repair in vegetative cells. The sequence is that of Holliday junction resolvase YEN1 (YEN1) from Saccharomyces cerevisiae (strain ATCC 204508 / S288c) (Baker's yeast).